The chain runs to 429 residues: MGYEKSIEAYKKAEQLMPGGVNSPVRAFKSVDMPAIFMDHGKGSKIYDIDGNEYIDYVLSWGPLILGHENPQVIENLHKAVDKGTSFGASTLEEIKLAELVIDRVPSIEKVRMVSSGTEATQDTIRLARGYTGRDKIVKFEGCYHGHSDSLLIKAGSGVATLGLPDSPGVPEGTAKSTITVPYNDLDAIRKAFELYGDDIAGVIVEPVAGNMGVVPPVEGFLQGLRDITNEYGSLLIFDEVMTGFRVGYNCAQGYFDVIPDLTCLGKVIGGGLPVGAFGGKKEIMDEIAPVGTIYQAGTLSGNPLAMTSGYETLSQLTPESYEYFNELGDMLEDGLKKVAAKHNVPMTVNRAGSMIGYFLNDGPVTNFEQANKSDLKLFSEMYREMAKEGVFLPPSQFEGTFLSTAHTKEDIERTIEAFDKTFERITNK.

N6-(pyridoxal phosphate)lysine is present on K267.

This sequence belongs to the class-III pyridoxal-phosphate-dependent aminotransferase family. HemL subfamily. Homodimer. The cofactor is pyridoxal 5'-phosphate.

Its subcellular location is the cytoplasm. It carries out the reaction (S)-4-amino-5-oxopentanoate = 5-aminolevulinate. It functions in the pathway porphyrin-containing compound metabolism; protoporphyrin-IX biosynthesis; 5-aminolevulinate from L-glutamyl-tRNA(Glu): step 2/2. This is Glutamate-1-semialdehyde 2,1-aminomutase 1 from Staphylococcus carnosus (strain TM300).